We begin with the raw amino-acid sequence, 68 residues long: Protein VNG_1110C (68 aa).

The protein is Protein VNG_1110C of Halobacterium salinarum (strain ATCC 700922 / JCM 11081 / NRC-1) (Halobacterium halobium).